A 249-amino-acid chain; its full sequence is Octanoyltransferase (249 aa).

The BPL/LPL catalytic domain maps to 53–234 (PDTDDEIWVV…RLIAHLDGAT (182 aa)). Substrate contacts are provided by residues 93–100 (RGGQITYH), 165–167 (ALG), and 178–180 (GLS). The active-site Acyl-thioester intermediate is Cys196.

The protein belongs to the LipB family.

The protein resides in the cytoplasm. The enzyme catalyses octanoyl-[ACP] + L-lysyl-[protein] = N(6)-octanoyl-L-lysyl-[protein] + holo-[ACP] + H(+). Its pathway is protein modification; protein lipoylation via endogenous pathway; protein N(6)-(lipoyl)lysine from octanoyl-[acyl-carrier-protein]: step 1/2. In terms of biological role, catalyzes the transfer of endogenously produced octanoic acid from octanoyl-acyl-carrier-protein onto the lipoyl domains of lipoate-dependent enzymes. Lipoyl-ACP can also act as a substrate although octanoyl-ACP is likely to be the physiological substrate. The protein is Octanoyltransferase of Burkholderia mallei (strain NCTC 10247).